Here is a 294-residue protein sequence, read N- to C-terminus: HTH-type transcriptional regulator DgdR (294 aa).

Residues 14 to 70 (LEIDLLRSFVVIAEVRALSRAAARVGRTQSALSQQMKRLEDIVDQPLFQRTGRGVVL) enclose the HTH lysR-type domain. Residues 31-50 (LSRAAARVGRTQSALSQQMK) constitute a DNA-binding region (H-T-H motif).

The protein belongs to the LysR transcriptional regulatory family.

The polypeptide is HTH-type transcriptional regulator DgdR (dgdR) (Burkholderia cepacia (Pseudomonas cepacia)).